The following is a 236-amino-acid chain: 2-C-methyl-D-erythritol 4-phosphate cytidylyltransferase (236 aa).

It belongs to the IspD/TarI cytidylyltransferase family. IspD subfamily. As to quaternary structure, homodimer.

It carries out the reaction 2-C-methyl-D-erythritol 4-phosphate + CTP + H(+) = 4-CDP-2-C-methyl-D-erythritol + diphosphate. Its pathway is isoprenoid biosynthesis; isopentenyl diphosphate biosynthesis via DXP pathway; isopentenyl diphosphate from 1-deoxy-D-xylulose 5-phosphate: step 2/6. In terms of biological role, catalyzes the formation of 4-diphosphocytidyl-2-C-methyl-D-erythritol from CTP and 2-C-methyl-D-erythritol 4-phosphate (MEP). The protein is 2-C-methyl-D-erythritol 4-phosphate cytidylyltransferase of Escherichia coli O17:K52:H18 (strain UMN026 / ExPEC).